The chain runs to 43 residues: Potassium channel toxin gamma-KTx 4.2 (43 aa).

Intrachain disulfides connect Cys5/Cys23, Cys11/Cys34, Cys20/Cys39, and Cys24/Cys41.

It belongs to the ergtoxin family. Gamma-KTx 4 subfamily. In terms of tissue distribution, expressed by the venom gland.

It is found in the secreted. Reversibly blocks Kv11/ERG potassium channels. The polypeptide is Potassium channel toxin gamma-KTx 4.2 (Centruroides noxius (Mexican scorpion)).